Consider the following 337-residue polypeptide: Quinolinate synthase (337 aa).

Iminosuccinate-binding residues include His38 and Ser59. Position 104 (Cys104) interacts with [4Fe-4S] cluster. Iminosuccinate is bound by residues 130 to 132 and Ser147; that span reads YAN. Cys191 is a [4Fe-4S] cluster binding site. Residues 217–219 and Thr234 contribute to the iminosuccinate site; that span reads HPE. Position 288 (Cys288) interacts with [4Fe-4S] cluster.

This sequence belongs to the quinolinate synthase family. Type 1 subfamily. Requires [4Fe-4S] cluster as cofactor.

It is found in the cytoplasm. It catalyses the reaction iminosuccinate + dihydroxyacetone phosphate = quinolinate + phosphate + 2 H2O + H(+). The protein operates within cofactor biosynthesis; NAD(+) biosynthesis; quinolinate from iminoaspartate: step 1/1. Its function is as follows. Catalyzes the condensation of iminoaspartate with dihydroxyacetone phosphate to form quinolinate. The polypeptide is Quinolinate synthase (Wigglesworthia glossinidia brevipalpis).